A 91-amino-acid polypeptide reads, in one-letter code: Small ribosomal subunit protein uS19 (91 aa).

Belongs to the universal ribosomal protein uS19 family.

Protein S19 forms a complex with S13 that binds strongly to the 16S ribosomal RNA. This chain is Small ribosomal subunit protein uS19, found in Trichodesmium erythraeum (strain IMS101).